Reading from the N-terminus, the 495-residue chain is Cysteine--tRNA ligase (495 aa).

Position 35 (C35) interacts with Zn(2+). The 'HIGH' region motif lies at 37–47 (PTVYSNVHLGN). Positions 230, 255, and 259 each coordinate Zn(2+). The short motif at 287–291 (KMSKS) is the 'KMSKS' region element. Residue K290 coordinates ATP.

It belongs to the class-I aminoacyl-tRNA synthetase family. Monomer. Requires Zn(2+) as cofactor.

The protein resides in the cytoplasm. The catalysed reaction is tRNA(Cys) + L-cysteine + ATP = L-cysteinyl-tRNA(Cys) + AMP + diphosphate. This is Cysteine--tRNA ligase from Flavobacterium psychrophilum (strain ATCC 49511 / DSM 21280 / CIP 103535 / JIP02/86).